Here is a 282-residue protein sequence, read N- to C-terminus: HTH-type transcriptional activator RhaR (282 aa).

Residues 179–277 (DKLITALANS…GMTPSQWRHL (99 aa)) form the HTH araC/xylS-type domain. 2 consecutive DNA-binding regions (H-T-H motif) follow at residues 196 to 217 (DAFC…RAQT) and 244 to 267 (ISEI…TRET).

As to quaternary structure, binds DNA as a dimer.

Its subcellular location is the cytoplasm. Functionally, activates expression of the rhaSR operon in response to L-rhamnose. This chain is HTH-type transcriptional activator RhaR, found in Salmonella dublin (strain CT_02021853).